The sequence spans 323 residues: Aldo-keto reductase family 1 member C21 (323 aa).

20–24 serves as a coordination point for NADP(+); it reads GFGTA. A substrate-binding site is contributed by lysine 31. Aspartate 50 lines the NADP(+) pocket. The Proton donor role is filled by tyrosine 55. A substrate-binding site is contributed by histidine 117. Residues 166–167, glutamine 190, 216–224, and 270–280 each bind NADP(+); these read SN, YGVLGTQRY, and TSLKEERIKEN.

It belongs to the aldo/keto reductase family. In terms of assembly, monomer. In terms of tissue distribution, detected in kidney and brain.

It is found in the cytoplasm. The catalysed reaction is androsterone + NADP(+) = 5alpha-androstan-3,17-dione + NADPH + H(+). The enzyme catalyses androsterone + NAD(+) = 5alpha-androstan-3,17-dione + NADH + H(+). With respect to regulation, inhibited by high concentrations of substrate. NADP-dependent 17-alpha-hydroxysteroid dehydrogenase that converts 5-alpha-androstane-3,17-dione into androsterone. Has lower 3-alpha-hydroxysteroid dehydrogenase activity. Has broad substrate specificity and acts on various 17-alpha-hydroxysteroids, 17-ketosteroids, 3-alpha hydroxysteroids and 3-ketosteroids. Reduction of keto groups is strictly stereoselective. Reduction of 17-ketosteroids yields only 17-alpha-hydroxysteroids. Likewise, reduction of 3-ketosteroids yields only 3-alpha-hydroxysteroids. The polypeptide is Aldo-keto reductase family 1 member C21 (Akr1c21) (Mus musculus (Mouse)).